A 493-amino-acid chain; its full sequence is Hexokinase-like 1 protein (493 aa).

In terms of domain architecture, Hexokinase spans 38 to 488 (ASTCPILTKF…SGLGAALLAA (451 aa)). The tract at residues 93–232 (SGNEEGLFYA…GLDMRVSALV (140 aa)) is hexokinase small subdomain. 3 residues coordinate ADP: G107, T108, and N109. Residues T198, K199, N233, and D234 each coordinate D-glucose. The interval 233–477 (NDGVGTLAGA…SHVAIKHTKD (245 aa)) is hexokinase large subdomain. Position 257 (T257) interacts with ADP. Residues N260, E287, and E317 each contribute to the D-glucose site. Position 442 (A442) interacts with ADP.

It belongs to the hexokinase family.

It carries out the reaction a D-hexose + ATP = a D-hexose 6-phosphate + ADP + H(+). It catalyses the reaction D-fructose + ATP = D-fructose 6-phosphate + ADP + H(+). The enzyme catalyses D-glucose + ATP = D-glucose 6-phosphate + ADP + H(+). The protein operates within carbohydrate metabolism; hexose metabolism. Its pathway is carbohydrate degradation; glycolysis; D-glyceraldehyde 3-phosphate and glycerone phosphate from D-glucose: step 1/4. In terms of biological role, fructose and glucose phosphorylating enzyme. This Arabidopsis thaliana (Mouse-ear cress) protein is Hexokinase-like 1 protein.